Consider the following 203-residue polypeptide: Thymidylate kinase (203 aa).

10-17 lines the ATP pocket; sequence GVEGSGKT.

This sequence belongs to the thymidylate kinase family.

It carries out the reaction dTMP + ATP = dTDP + ADP. Its function is as follows. Phosphorylation of dTMP to form dTDP in both de novo and salvage pathways of dTTP synthesis. This chain is Thymidylate kinase, found in Carboxydothermus hydrogenoformans (strain ATCC BAA-161 / DSM 6008 / Z-2901).